The primary structure comprises 567 residues: Proline--tRNA ligase (567 aa).

It belongs to the class-II aminoacyl-tRNA synthetase family. ProS type 1 subfamily. Homodimer.

Its subcellular location is the cytoplasm. The enzyme catalyses tRNA(Pro) + L-proline + ATP = L-prolyl-tRNA(Pro) + AMP + diphosphate. Catalyzes the attachment of proline to tRNA(Pro) in a two-step reaction: proline is first activated by ATP to form Pro-AMP and then transferred to the acceptor end of tRNA(Pro). As ProRS can inadvertently accommodate and process non-cognate amino acids such as alanine and cysteine, to avoid such errors it has two additional distinct editing activities against alanine. One activity is designated as 'pretransfer' editing and involves the tRNA(Pro)-independent hydrolysis of activated Ala-AMP. The other activity is designated 'posttransfer' editing and involves deacylation of mischarged Ala-tRNA(Pro). The misacylated Cys-tRNA(Pro) is not edited by ProRS. The protein is Proline--tRNA ligase of Fusobacterium nucleatum subsp. nucleatum (strain ATCC 25586 / DSM 15643 / BCRC 10681 / CIP 101130 / JCM 8532 / KCTC 2640 / LMG 13131 / VPI 4355).